The following is a 407-amino-acid chain: Acetate kinase (407 aa).

Mg(2+) is bound at residue asparagine 10. Lysine 17 is a binding site for ATP. Position 93 (arginine 93) interacts with substrate. Catalysis depends on aspartate 150, which acts as the Proton donor/acceptor. ATP is bound by residues 210 to 214 (HLGNG), 284 to 286 (DMR), and 332 to 336 (GVGEN). Glutamate 386 is a binding site for Mg(2+).

It belongs to the acetokinase family. Homodimer. It depends on Mg(2+) as a cofactor. The cofactor is Mn(2+).

It is found in the cytoplasm. It carries out the reaction acetate + ATP = acetyl phosphate + ADP. It participates in metabolic intermediate biosynthesis; acetyl-CoA biosynthesis; acetyl-CoA from acetate: step 1/2. Its function is as follows. Catalyzes the formation of acetyl phosphate from acetate and ATP. Can also catalyze the reverse reaction. The polypeptide is Acetate kinase (Streptomyces coelicolor (strain ATCC BAA-471 / A3(2) / M145)).